The following is a 499-amino-acid chain: C2H2-type transcription factor RPN4 (499 aa).

The tract at residues glutamine 329–lysine 397 is disordered. The span at threonine 331–valine 344 shows a compositional bias: basic and acidic residues. Over residues glutamate 345–alanine 363 the composition is skewed to polar residues. The segment at phenylalanine 405–histidine 436 adopts a C2H2-type zinc-finger fold.

It is found in the nucleus. Its function is as follows. Transcription factor that acts as a transcriptional activator of a number of genes encoding proteasomal subunits. Plays a role in ergosterol and plasma membrane homeostasis, and subsequent azole resistance. Regulates the expression of 212 genes, activating 80 genes and repressing, likely in an indirect fashion, 132 genes. Targets comprise several proteasome and ergosterol biosynthesis genes, including ERG1, ERG2, ERG3, and ERG11. Directly regulates ERG11 expression through the 3'-TTGCAAA-5' binding motif. The sequence is that of C2H2-type transcription factor RPN4 from Candida glabrata (strain ATCC 2001 / BCRC 20586 / JCM 3761 / NBRC 0622 / NRRL Y-65 / CBS 138) (Yeast).